The primary structure comprises 319 residues: Polyprenal reductase (319 aa).

Over 1–12 the chain is Cytoplasmic; sequence MQLVQLLPPGVS. A helical transmembrane segment spans residues 13-33; sequence LLALVWLAVDAAFLTALLLYL. Residues 34 to 79 lie on the Lumenal side of the membrane; that stretch reads QRGCDSGRSLLCSVFQDLIRYGKTKSGLRRPSWLQWFDIPKRCFWH. The chain crosses the membrane as a helical span at residues 80 to 100; the sequence is FYFVSLVWNGFLLWILLHLLL. The Cytoplasmic segment spans residues 101 to 122; that stretch reads QSVPVPEWLQAVLQFLCAGSEP. Residues 123–143 traverse the membrane as a helical segment; the sequence is QVLGGELSVVLAFSLLWLHSL. Topologically, residues 144–158 are lumenal; that stretch reads RRLLECLFVSIFSNG. A helical transmembrane segment spans residues 159-179; sequence VIHFVQYCFGLGYYILIGFTI. Over 180 to 195 the chain is Cytoplasmic; that stretch reads LGYCPLDRRTAVSLDD. Residues 196 to 216 traverse the membrane as a helical segment; that stretch reads LLMQGNWYHILGLTLYVWASL. Topologically, residues 217-266 are lumenal; it reads HQYTCHCILADLRKSASGAIINLKHAVPTGDWFEKVSCPHYFAELLIYLS. The chain crosses the membrane as a helical span at residues 267–287; the sequence is IAVVFGLLNTIWWLVVLYVLL. The Cytoplasmic portion of the chain corresponds to 288–319; that stretch reads SQALAAVLCHEFYHEKFDSYPIHRKAFIPLIF.

It belongs to the steroid 5-alpha reductase family. Polyprenal reductase subfamily.

The protein localises to the endoplasmic reticulum membrane. The enzyme catalyses a di-trans,poly-cis-dolichal + NADP(+) = a di-trans,poly-cis-polyprenal + NADPH + H(+). It carries out the reaction a 3-oxo-5alpha-steroid + NADP(+) = a 3-oxo-Delta(4)-steroid + NADPH + H(+). It catalyses the reaction androst-4-ene-3,17-dione + NADPH + H(+) = 5alpha-androstan-3,17-dione + NADP(+). The catalysed reaction is 17beta-hydroxy-5alpha-androstan-3-one + NADP(+) = testosterone + NADPH + H(+). It functions in the pathway protein modification; protein glycosylation. Plays a key role in early steps of protein N-linked glycosylation by being involved in the conversion of polyprenol into dolichol. Acts as a polyprenal reductase that mediates the reduction of polyprenal into dolichal in a NADP-dependent mechanism. Dolichols are required for the synthesis of dolichol-linked monosaccharides and the oligosaccharide precursor used for N-glycosylation. Also able to convert testosterone (T) into 5-alpha-dihydrotestosterone (DHT). The sequence is that of Polyprenal reductase (srd5a3) from Xenopus laevis (African clawed frog).